We begin with the raw amino-acid sequence, 138 residues long: Nucleoside diphosphate kinase (138 aa).

Positions 9, 57, 85, 91, 102, and 112 each coordinate ATP. H115 functions as the Pros-phosphohistidine intermediate in the catalytic mechanism.

Belongs to the NDK family. Homotetramer. It depends on Mg(2+) as a cofactor.

It is found in the cytoplasm. The enzyme catalyses a 2'-deoxyribonucleoside 5'-diphosphate + ATP = a 2'-deoxyribonucleoside 5'-triphosphate + ADP. The catalysed reaction is a ribonucleoside 5'-diphosphate + ATP = a ribonucleoside 5'-triphosphate + ADP. In terms of biological role, major role in the synthesis of nucleoside triphosphates other than ATP. The ATP gamma phosphate is transferred to the NDP beta phosphate via a ping-pong mechanism, using a phosphorylated active-site intermediate. In Deinococcus deserti (strain DSM 17065 / CIP 109153 / LMG 22923 / VCD115), this protein is Nucleoside diphosphate kinase.